We begin with the raw amino-acid sequence, 337 residues long: MAVKVAINGFGRIGRLAARAILSRPDSGLELVTINDLGSVEGNAFLFKRDSAHGTYPGTVTTEGNDMVIDGKKIVVTAERDPANLPHKKLGVDIVMECTGIFTNTEKASAHLTAGAKKVLISAPAKGDVDRTVVYGVNHKDLTADDKIVSNASCTTNCLAPVLHVLQQKIGIVRGLMTTVHSFTNDQRILDQIHSDLRRARTASASMIPTSTGAARAVALVIPELKGKLDGISIRVPTPDVSLVDFTFVPQRDTTAEEINSVLKAAADTGDMTGVLGYTDEPLVSRDFYSDPHSSTVDSRETAVLEGKLARVVAWYDNEWGFSNRMVDTAAQMAKTL.

NAD(+)-binding positions include 12 to 13, Asp36, Arg80, and Ser122; that span reads RI. D-glyceraldehyde 3-phosphate is bound by residues 153–155 and Thr184; that span reads SCT. The active-site Nucleophile is Cys154. Asn185 is an NAD(+) binding site. D-glyceraldehyde 3-phosphate contacts are provided by residues Arg199, 212–213, and Arg235; that span reads TG. Position 318 (Asn318) interacts with NAD(+).

It belongs to the glyceraldehyde-3-phosphate dehydrogenase family. In terms of assembly, homotetramer.

The protein localises to the cytoplasm. The catalysed reaction is D-glyceraldehyde 3-phosphate + phosphate + NAD(+) = (2R)-3-phospho-glyceroyl phosphate + NADH + H(+). The protein operates within carbohydrate degradation; glycolysis; pyruvate from D-glyceraldehyde 3-phosphate: step 1/5. Functionally, catalyzes the oxidative phosphorylation of glyceraldehyde 3-phosphate (G3P) to 1,3-bisphosphoglycerate (BPG) using the cofactor NAD. The first reaction step involves the formation of a hemiacetal intermediate between G3P and a cysteine residue, and this hemiacetal intermediate is then oxidized to a thioester, with concomitant reduction of NAD to NADH. The reduced NADH is then exchanged with the second NAD, and the thioester is attacked by a nucleophilic inorganic phosphate to produce BPG. The chain is Glyceraldehyde-3-phosphate dehydrogenase (gap) from Zymomonas mobilis subsp. mobilis (strain ATCC 31821 / ZM4 / CP4).